A 963-amino-acid polypeptide reads, in one-letter code: MHC class II regulatory factor RFX1 (963 aa).

Disordered stretches follow at residues 1–88, 105–126, 174–218, and 361–392; these read MATQ…APSP, ASET…VPTQ, QSPA…GTPA, and SSSE…GSSG. Residues 20 to 41 show a composition bias toward pro residues; it reads PQAPPQALPQPPPPAAPQPPAA. A compositionally biased stretch (low complexity) spans 42–67; that stretch reads ATPQPQYVTELQSPQPQTQPPGSQKQ. Phosphoserine is present on Ser54. The span at 75 to 87 shows a compositional bias: pro residues; it reads APAPSQPATPAPS. Polar residues-rich tracts occupy residues 107-119, 181-196, and 204-214; these read ETVS…STAS, KSGQ…QQVH, and VQANNSTSKTA. Residues 361–372 are compositionally biased toward low complexity; sequence SSSEAGASNSSV. Residues 373–392 show a composition bias toward gly residues; that stretch reads GAGGNGGGGSSGGGSGGSSG. Residues 423–498 constitute a DNA-binding region (RFX-type winged-helix); the sequence is TVQWLLDNYE…YHYYGLRIKA (76 aa). Positions 899-948 are disordered; the sequence is SLNPLDPDKDEEEEEEEESEDELPQDISLAAGSESPALGPEALEPPAKLA. Residues 906-922 show a composition bias toward acidic residues; the sequence is DKDEEEEEEEESEDELP. Low complexity predominate over residues 932-947; that stretch reads ESPALGPEALEPPAKL. Phosphoserine is present on residues Ser962 and Ser963.

Belongs to the RFX family. As to quaternary structure, homodimer; binds DNA as a homodimer. Heterodimer; heterodimerizes with RFX2 and RFX3.

Its subcellular location is the nucleus. Functionally, regulatory factor essential for MHC class II genes expression. Binds to the X boxes of MHC class II genes. The chain is MHC class II regulatory factor RFX1 (Rfx1) from Mus musculus (Mouse).